An 83-amino-acid chain; its full sequence is Neurotoxin LmNaTx34.5 (83 aa).

Positions 1–15 (FILVVIALMVIEVKS) are cleaved as a signal peptide. Residues 16–82 (DGYLMVRAGR…IWTYEKNTCS (67 aa)) enclose the LCN-type CS-alpha/beta domain. Disulfide bonds link Cys29–Cys81, Cys33–Cys54, Cys40–Cys61, and Cys44–Cys63.

It belongs to the long (4 C-C) scorpion toxin superfamily. Sodium channel inhibitor family. Beta subfamily. In terms of tissue distribution, expressed by the venom gland.

Its subcellular location is the secreted. Its function is as follows. Binds voltage-independently at site-4 of sodium channels (Nav) and shift the voltage of activation toward more negative potentials thereby affecting sodium channel activation and promoting spontaneous and repetitive firing. This Lychas mucronatus (Chinese swimming scorpion) protein is Neurotoxin LmNaTx34.5.